A 282-amino-acid chain; its full sequence is NADPH-dependent 7-cyano-7-deazaguanine reductase (282 aa).

88-90 (IES) contributes to the substrate binding site. 90 to 91 (SK) contacts NADPH. Catalysis depends on Cys-190, which acts as the Thioimide intermediate. Residue Asp-197 is the Proton donor of the active site. 229-230 (HE) is a binding site for substrate. Residue 258–259 (RG) coordinates NADPH.

This sequence belongs to the GTP cyclohydrolase I family. QueF type 2 subfamily. As to quaternary structure, homodimer.

The protein resides in the cytoplasm. The catalysed reaction is 7-aminomethyl-7-carbaguanine + 2 NADP(+) = 7-cyano-7-deazaguanine + 2 NADPH + 3 H(+). Its pathway is tRNA modification; tRNA-queuosine biosynthesis. In terms of biological role, catalyzes the NADPH-dependent reduction of 7-cyano-7-deazaguanine (preQ0) to 7-aminomethyl-7-deazaguanine (preQ1). The protein is NADPH-dependent 7-cyano-7-deazaguanine reductase of Escherichia coli (strain UTI89 / UPEC).